We begin with the raw amino-acid sequence, 255 residues long: 5'-nucleotidase SurE (255 aa).

Aspartate 8, aspartate 9, serine 40, and asparagine 93 together coordinate a divalent metal cation.

It belongs to the SurE nucleotidase family. Requires a divalent metal cation as cofactor.

It localises to the cytoplasm. It catalyses the reaction a ribonucleoside 5'-phosphate + H2O = a ribonucleoside + phosphate. Nucleotidase that shows phosphatase activity on nucleoside 5'-monophosphates. The sequence is that of 5'-nucleotidase SurE from Bradyrhizobium sp. (strain BTAi1 / ATCC BAA-1182).